A 412-amino-acid chain; its full sequence is Divalent metal cation transporter MntH (412 aa).

Helical transmembrane passes span 19-39 (LSLMGPAFIAAIGYIDPGNFA), 46-66 (AAYGYTLLWVVVWANLMAMLI), 98-118 (WVQAEIIAMATDLAEFIGAAI), 122-142 (LLLGVSLLEGAILTAIATFLI), 155-175 (MVIGGLLLFVAAAYIVELVFS), 196-216 (AVLLAAGVLGATIMPHVIYLH), 241-261 (IAMTIAGFVNLAMMATAAAAF), 286-306 (AAAVIFGLSLVAAGLSSTVVG), 348-368 (VLVLSQVVLSFGIALALVPLL), and 392-412 (LIVVLVVSLNMYLLIDTMSGI).

This sequence belongs to the NRAMP family.

The protein resides in the cell inner membrane. Its function is as follows. H(+)-stimulated, divalent metal cation uptake system. The polypeptide is Divalent metal cation transporter MntH (Pectobacterium carotovorum subsp. carotovorum (strain PC1)).